Reading from the N-terminus, the 467-residue chain is 3-isopropylmalate dehydratase large subunit (467 aa).

[4Fe-4S] cluster contacts are provided by cysteine 348, cysteine 409, and cysteine 412.

Belongs to the aconitase/IPM isomerase family. LeuC type 1 subfamily. As to quaternary structure, heterodimer of LeuC and LeuD. Requires [4Fe-4S] cluster as cofactor.

It catalyses the reaction (2R,3S)-3-isopropylmalate = (2S)-2-isopropylmalate. It participates in amino-acid biosynthesis; L-leucine biosynthesis; L-leucine from 3-methyl-2-oxobutanoate: step 2/4. In terms of biological role, catalyzes the isomerization between 2-isopropylmalate and 3-isopropylmalate, via the formation of 2-isopropylmaleate. The sequence is that of 3-isopropylmalate dehydratase large subunit from Thiobacillus denitrificans (strain ATCC 25259 / T1).